The chain runs to 154 residues: Telokin (154 aa).

The interval 1–24 (ISGMSGRKASGSSPTSPINANKVE) is disordered. The span at 10 to 19 (SGSSPTSPIN) shows a compositional bias: polar residues. The Ig-like C2-type domain maps to 42-133 (PYFTKTILDM…ATCTAELLVE (92 aa)). Residues 134-154 (TMGKEGEGEGEGEEDEEEEEE) are disordered. A compositionally biased stretch (acidic residues) spans 141–154 (GEGEGEEDEEEEEE).

This sequence belongs to the protein kinase superfamily. CAMK Ser/Thr protein kinase family. In terms of assembly, binds calmodulin.

Functionally, corresponds to the C-terminus of smooth muscle myosin light chain kinase. This is Telokin from Meleagris gallopavo (Wild turkey).